Here is a 168-residue protein sequence, read N- to C-terminus: Peptide methionine sulfoxide reductase 2 (168 aa).

Residues 40 to 168 (DVKWNDALTP…NSASLNLKKD (129 aa)) enclose the MsrB domain. Cys79, Cys82, Cys128, and Cys131 together coordinate Zn(2+). Cysteines 97 and 157 form a disulfide. Cys157 serves as the catalytic Nucleophile.

Belongs to the MsrB Met sulfoxide reductase family. Zn(2+) serves as cofactor.

It carries out the reaction L-methionyl-[protein] + [thioredoxin]-disulfide + H2O = L-methionyl-(R)-S-oxide-[protein] + [thioredoxin]-dithiol. Its function is as follows. Methionine-R-sulfoxide reductase which catalyzes the reduction of methionine sulfoxide (MetSO) to methionine in proteins. Plays a protective role against oxidative stress by restoring activity to proteins that have been inactivated by methionine oxidation. Protects iron-sulfur clusters from oxidative inactivation along with MXR1. Involved in the regulation of lifespan. This chain is Peptide methionine sulfoxide reductase 2 (MXR2), found in Saccharomyces cerevisiae (strain ATCC 204508 / S288c) (Baker's yeast).